The sequence spans 103 residues: Phosphoribosyl-ATP pyrophosphatase (103 aa).

The protein belongs to the PRA-PH family.

The protein resides in the cytoplasm. It carries out the reaction 1-(5-phospho-beta-D-ribosyl)-ATP + H2O = 1-(5-phospho-beta-D-ribosyl)-5'-AMP + diphosphate + H(+). It functions in the pathway amino-acid biosynthesis; L-histidine biosynthesis; L-histidine from 5-phospho-alpha-D-ribose 1-diphosphate: step 2/9. This is Phosphoribosyl-ATP pyrophosphatase from Listeria monocytogenes serotype 4b (strain CLIP80459).